The chain runs to 147 residues: Hemoglobin subunit deltaH (147 aa).

Positions 3-147 constitute a Globin domain; that stretch reads RLTDSEKAEV…MANALAHKYH (145 aa). Residues His-64 and His-93 each contribute to the heme b site.

It belongs to the globin family. Heterotetramer of two delta chains and two alpha chains. Red blood cells.

This is Hemoglobin subunit deltaH (HBD) from Dendrohyrax dorsalis (Beecroft's tree hyrax).